Consider the following 128-residue polypeptide: Aspartate 1-decarboxylase (128 aa).

The Schiff-base intermediate with substrate; via pyruvic acid role is filled by S25. Position 25 is a pyruvic acid (Ser) (S25). T57 serves as a coordination point for substrate. The active-site Proton donor is the Y58. 73-75 (GAA) is a binding site for substrate.

It belongs to the PanD family. In terms of assembly, heterooctamer of four alpha and four beta subunits. It depends on pyruvate as a cofactor. In terms of processing, is synthesized initially as an inactive proenzyme, which is activated by self-cleavage at a specific serine bond to produce a beta-subunit with a hydroxyl group at its C-terminus and an alpha-subunit with a pyruvoyl group at its N-terminus.

Its subcellular location is the cytoplasm. The catalysed reaction is L-aspartate + H(+) = beta-alanine + CO2. It participates in cofactor biosynthesis; (R)-pantothenate biosynthesis; beta-alanine from L-aspartate: step 1/1. Its function is as follows. Catalyzes the pyruvoyl-dependent decarboxylation of aspartate to produce beta-alanine. This Moorella thermoacetica (strain ATCC 39073 / JCM 9320) protein is Aspartate 1-decarboxylase.